A 173-amino-acid chain; its full sequence is Spermidine N(1)-acetyltransferase (173 aa).

The region spanning 5–162 (LTLRALERGD…GRYQDVKRMY (158 aa)) is the N-acetyltransferase domain. Spermine is bound by residues methionine 28, glutamate 33, glutamate 41, and 49–52 (HIHD). Glutamate 33 serves as a coordination point for Mg(2+). Spermidine contacts are provided by glutamate 33 and glutamate 41. Glutamate 75 provides a ligand contact to Mg(2+). 84-86 (EFQ) is a spermine binding site. Acetyl-CoA is bound by residues 87 to 89 (III), 94 to 100 (QGKGFAR), and 127 to 136 (NPKAVHLYEE). Tyrosine 134 serves as the catalytic Proton donor.

Belongs to the acetyltransferase family. As to quaternary structure, homododecamer; dimer of hexamers. Exists in solution in a variety of protein homooligomeric states including dodecamers in an open state. The presence of the polyamines spermidine or spermine shifts the equilibrium to dodecamers and induces the formation of the closed, symmetric dodecamers.

It is found in the cytoplasm. It carries out the reaction an alkane-alpha,omega-diamine + acetyl-CoA = an N-acetylalkane-alpha,omega-diamine + CoA + H(+). The catalysed reaction is spermidine + acetyl-CoA = N(1)-acetylspermidine + CoA + H(+). The enzyme catalyses spermidine + acetyl-CoA = N(8)-acetylspermidine + CoA + H(+). It catalyses the reaction spermine + acetyl-CoA = N(1)-acetylspermine + CoA + H(+). It participates in amine and polyamine degradation; spermidine degradation. It functions in the pathway amine and polyamine degradation; spermine degradation. Allosterically regulated by polyamines. Polyamines trigger conformational changes and induce the symmetric closed dodecameric state of the protein when they bind to their allosteric sites. In terms of biological role, involved in the protection against polyamine toxicity by regulating their concentration. Catalyzes the transfer of an acetyl group from acetyl coenzyme A (AcCoA) to the primary amino groups of spermidine to yield N(1)- and N(8)-acetylspermidine. It can use polyamines such as spermine and N(1)-acetylspermine, but not putrescine or cadaverine. This Vibrio cholerae serotype O1 (strain ATCC 39315 / El Tor Inaba N16961) protein is Spermidine N(1)-acetyltransferase (speG).